We begin with the raw amino-acid sequence, 312 residues long: DNA-directed RNA polymerase subunit alpha (312 aa).

An alpha N-terminal domain (alpha-NTD) region spans residues Met-1–Thr-229. Residues Glu-239–Ala-312 are alpha C-terminal domain (alpha-CTD).

The protein belongs to the RNA polymerase alpha chain family. As to quaternary structure, in cyanobacteria the RNAP catalytic core is composed of 2 alpha, 1 beta, 1 beta', 1 gamma and 1 omega subunit. When a sigma factor is associated with the core the holoenzyme is formed, which can initiate transcription.

The enzyme catalyses RNA(n) + a ribonucleoside 5'-triphosphate = RNA(n+1) + diphosphate. Functionally, DNA-dependent RNA polymerase catalyzes the transcription of DNA into RNA using the four ribonucleoside triphosphates as substrates. The polypeptide is DNA-directed RNA polymerase subunit alpha (Synechococcus sp. (strain CC9605)).